The chain runs to 930 residues: Polypeptide N-acetylgalactosaminyltransferase 5 (930 aa).

At Met1 to Gly12 the chain is on the cytoplasmic side. Residues Arg13–Leu35 traverse the membrane as a helical; Signal-anchor for type II membrane protein segment. The Lumenal portion of the chain corresponds to Ser36–Val930. The disordered stretch occupies residues Gly163–Arg210. An N-linked (GlcNAc...) asparagine glycan is attached at Asn178. Over residues Thr180 to Ala193 the composition is skewed to basic and acidic residues. A compositionally biased stretch (polar residues) spans Tyr197 to Arg210. Asn198 and Asn213 each carry an N-linked (GlcNAc...) asparagine glycan. A Phosphoserine modification is found at Ser285. N-linked (GlcNAc...) asparagine glycans are attached at residues Asn287 and Asn309. The segment at Leu344–Leu377 is disordered. N-linked (GlcNAc...) asparagine glycosylation is found at Asn387 and Asn403. Cystine bridges form between Cys476–Cys708, Cys699–Cys779, and Cys812–Cys825. The catalytic subdomain A stretch occupies residues Leu485–Arg594. The substrate site is built by Asp526 and Arg555. Asn568 is a glycosylation site (N-linked (GlcNAc...) asparagine). Asp578 lines the Mn(2+) pocket. Residue Ser579 coordinates substrate. Residue His580 participates in Mn(2+) binding. A catalytic subdomain B region spans residues Ile654–Arg716. Trp685 contacts substrate. His713 lines the Mn(2+) pocket. Positions 716 and 721 each coordinate substrate. 3 N-linked (GlcNAc...) asparagine glycosylation sites follow: Asn766, Asn817, and Asn835. Positions Lys794–Glu925 constitute a Ricin B-type lectin domain. 2 disulfides stabilise this stretch: Cys848-Cys863 and Cys898-Cys913. Residue Asn902 is glycosylated (N-linked (GlcNAc...) asparagine).

Belongs to the glycosyltransferase 2 family. GalNAc-T subfamily. In terms of assembly, interacts with EXT2. Does not interact with EXT1, EXTL1 or EXTL3. Requires Mn(2+) as cofactor. In terms of tissue distribution, predominantly expressed in sublingual gland. Expressed at lower level in stomach and small intestine. Weakly or not expressed in submandibular gland, parotid gland, kidney, liver, heart, brain, spleen, lung, skeletal muscle, testis, ovary, cervix and uterus.

It is found in the golgi apparatus membrane. The enzyme catalyses L-seryl-[protein] + UDP-N-acetyl-alpha-D-galactosamine = a 3-O-[N-acetyl-alpha-D-galactosaminyl]-L-seryl-[protein] + UDP + H(+). The catalysed reaction is L-threonyl-[protein] + UDP-N-acetyl-alpha-D-galactosamine = a 3-O-[N-acetyl-alpha-D-galactosaminyl]-L-threonyl-[protein] + UDP + H(+). Its pathway is protein modification; protein glycosylation. Catalyzes the initial reaction in O-linked oligosaccharide biosynthesis, the transfer of an N-acetyl-D-galactosamine residue to a serine or threonine residue on the protein receptor. Has activity toward EA2 peptide substrate, but has a weak activity toward Muc2, Muc1b, rMuc-2 or mG-Muc substrates. This chain is Polypeptide N-acetylgalactosaminyltransferase 5 (Galnt5), found in Rattus norvegicus (Rat).